The following is a 440-amino-acid chain: UDP-N-acetylglucosamine 1-carboxyvinyltransferase (440 aa).

22–23 (KN) is a binding site for phosphoenolpyruvate. Residue Arg-102 participates in UDP-N-acetyl-alpha-D-glucosamine binding. Cys-126 acts as the Proton donor in catalysis. Cys-126 carries the 2-(S-cysteinyl)pyruvic acid O-phosphothioketal modification. UDP-N-acetyl-alpha-D-glucosamine is bound by residues 131 to 135 (RPVDQ), Asp-320, and Ile-342.

The protein belongs to the EPSP synthase family. MurA subfamily.

It is found in the cytoplasm. It carries out the reaction phosphoenolpyruvate + UDP-N-acetyl-alpha-D-glucosamine = UDP-N-acetyl-3-O-(1-carboxyvinyl)-alpha-D-glucosamine + phosphate. It participates in cell wall biogenesis; peptidoglycan biosynthesis. Its function is as follows. Cell wall formation. Adds enolpyruvyl to UDP-N-acetylglucosamine. This Acidovorax ebreus (strain TPSY) (Diaphorobacter sp. (strain TPSY)) protein is UDP-N-acetylglucosamine 1-carboxyvinyltransferase.